A 240-amino-acid chain; its full sequence is MSDIKYNRVILKLSGEALAGEKGFGINPPVLKDVAKELKEVHELGVQIAIVVGGGNMWRGVTGAELGMERAQADYIGMLATIMNALSLQDALESLDVPTRVQTSIEMRQIAEPYIRRKAIRHLEKDRIVIFAGGTGSPYFSTDTTAALRAAEINADAILMGKNGVDGVYNADPNKDASAVKFDHLTHMDLIEKNLHVMDTTASSLSMDNHIPLVVFNLNTPGNIMKVVKGQEVGTTIEGD.

12–15 provides a ligand contact to ATP; sequence KLSG. The involved in allosteric activation by GTP stretch occupies residues 20–25; sequence GEKGFG. Glycine 54 provides a ligand contact to UMP. ATP-binding residues include glycine 55 and arginine 59. UMP contacts are provided by residues aspartate 74 and 135-142; that span reads TGSPYFST. 3 residues coordinate ATP: asparagine 163, tyrosine 169, and aspartate 172.

Belongs to the UMP kinase family. In terms of assembly, homohexamer.

The protein localises to the cytoplasm. The catalysed reaction is UMP + ATP = UDP + ADP. The protein operates within pyrimidine metabolism; CTP biosynthesis via de novo pathway; UDP from UMP (UMPK route): step 1/1. Its activity is regulated as follows. Allosterically activated by GTP. Inhibited by UTP. Catalyzes the reversible phosphorylation of UMP to UDP. The protein is Uridylate kinase of Limosilactobacillus reuteri (Lactobacillus reuteri).